The chain runs to 371 residues: MLMASTTSAVPGHPSLPSLPSNSSQERPLDTRDPLLARAELALLSIVFVAVALSNGLVLAALARRGRRGHWAPIHVFIGHLCLADLAVALFQVLPQLAWKATDRFRGPDALCRAVKYLQMVGMYASSYMILAMTLDRHRAICRPMLAYRHGSGAHWNRPVLVAWAFSLLLSLPQLFIFAQRNVEGGSGVTDCWACFAEPWGRRTYVTWIALMVFVAPTLGIAACQVLIFREIHASLVPGPSERPGGRRRGRRTGSPGEGAHVSAAVAKTVRMTLVIVVVYVLCWAPFFLVQLWAAWDPEAPLEGAPFVLLMLLASLNSCTNPWIYASFSSSVSSELRSLLCCARGRTPPSLGPQDESCTTASSSLAKDTSS.

The disordered stretch occupies residues 1–30; sequence MLMASTTSAVPGHPSLPSLPSNSSQERPLD. Residues 1–38 are Extracellular-facing; it reads MLMASTTSAVPGHPSLPSLPSNSSQERPLDTRDPLLAR. Positions 15–24 are enriched in low complexity; it reads SLPSLPSNSS. Asn22 carries N-linked (GlcNAc...) asparagine glycosylation. Residues 39–63 form a helical membrane-spanning segment; it reads AELALLSIVFVAVALSNGLVLAALA. Residues 64–77 are Cytoplasmic-facing; the sequence is RRGRRGHWAPIHVF. A helical membrane pass occupies residues 78 to 98; the sequence is IGHLCLADLAVALFQVLPQLA. Residues 99–113 lie on the Extracellular side of the membrane; sequence WKATDRFRGPDALCR. A helical transmembrane segment spans residues 114 to 135; that stretch reads AVKYLQMVGMYASSYMILAMTL. Residues 136–159 are Cytoplasmic-facing; sequence DRHRAICRPMLAYRHGSGAHWNRP. The chain crosses the membrane as a helical span at residues 160 to 180; sequence VLVAWAFSLLLSLPQLFIFAQ. The Extracellular portion of the chain corresponds to 181–200; the sequence is RNVEGGSGVTDCWACFAEPW. The helical transmembrane segment at 201-220 threads the bilayer; it reads GRRTYVTWIALMVFVAPTLG. Residues 221-271 lie on the Cytoplasmic side of the membrane; that stretch reads IAACQVLIFREIHASLVPGPSERPGGRRRGRRTGSPGEGAHVSAAVAKTVR. Residues 240–259 form a disordered region; that stretch reads PSERPGGRRRGRRTGSPGEG. The helical transmembrane segment at 272 to 293 threads the bilayer; the sequence is MTLVIVVVYVLCWAPFFLVQLW. The Extracellular portion of the chain corresponds to 294-308; it reads AAWDPEAPLEGAPFV. The helical transmembrane segment at 309-328 threads the bilayer; it reads LLMLLASLNSCTNPWIYASF. Residues 329–371 lie on the Cytoplasmic side of the membrane; that stretch reads SSSVSSELRSLLCCARGRTPPSLGPQDESCTTASSSLAKDTSS. Residues Cys341 and Cys342 are each lipidated (S-palmitoyl cysteine). The segment at 349 to 371 is disordered; that stretch reads PSLGPQDESCTTASSSLAKDTSS. Polar residues predominate over residues 356 to 371; the sequence is ESCTTASSSLAKDTSS.

The protein belongs to the G-protein coupled receptor 1 family. Vasopressin/oxytocin receptor subfamily. Interacts with ARRDC4. Identified in a complex containing at least ARRDC4, V2R and HGS. Interacts with TMEM147. As to expression, kidney.

It localises to the cell membrane. In terms of biological role, receptor for arginine vasopressin. The activity of this receptor is mediated by G proteins which activate adenylate cyclase. Involved in renal water reabsorption. This Homo sapiens (Human) protein is Vasopressin V2 receptor (AVPR2).